Reading from the N-terminus, the 424-residue chain is Serine--tRNA ligase (424 aa).

Thr233–Glu235 is a binding site for L-serine. Residues Arg264 to Glu266 and Val280 each bind ATP. Position 287 (Glu287) interacts with L-serine. Glu351–Ser354 is a binding site for ATP. Position 386 (Ser386) interacts with L-serine.

It belongs to the class-II aminoacyl-tRNA synthetase family. Type-1 seryl-tRNA synthetase subfamily. In terms of assembly, homodimer. The tRNA molecule binds across the dimer.

It localises to the cytoplasm. The catalysed reaction is tRNA(Ser) + L-serine + ATP = L-seryl-tRNA(Ser) + AMP + diphosphate + H(+). It carries out the reaction tRNA(Sec) + L-serine + ATP = L-seryl-tRNA(Sec) + AMP + diphosphate + H(+). The protein operates within aminoacyl-tRNA biosynthesis; selenocysteinyl-tRNA(Sec) biosynthesis; L-seryl-tRNA(Sec) from L-serine and tRNA(Sec): step 1/1. Catalyzes the attachment of serine to tRNA(Ser). Is also able to aminoacylate tRNA(Sec) with serine, to form the misacylated tRNA L-seryl-tRNA(Sec), which will be further converted into selenocysteinyl-tRNA(Sec). The sequence is that of Serine--tRNA ligase from Kosmotoga olearia (strain ATCC BAA-1733 / DSM 21960 / TBF 19.5.1).